The following is a 421-amino-acid chain: Thymidine phosphorylase (421 aa).

It belongs to the thymidine/pyrimidine-nucleoside phosphorylase family. As to quaternary structure, homodimer.

It carries out the reaction thymidine + phosphate = 2-deoxy-alpha-D-ribose 1-phosphate + thymine. The enzymes which catalyze the reversible phosphorolysis of pyrimidine nucleosides are involved in the degradation of these compounds and in their utilization as carbon and energy sources, or in the rescue of pyrimidine bases for nucleotide synthesis. In Mycoplasma pneumoniae (strain ATCC 29342 / M129 / Subtype 1) (Mycoplasmoides pneumoniae), this protein is Thymidine phosphorylase (deoA).